A 61-amino-acid polypeptide reads, in one-letter code: Large ribosomal subunit protein bL33 (61 aa).

Belongs to the bacterial ribosomal protein bL33 family.

The chain is Large ribosomal subunit protein bL33 from Amoebophilus asiaticus (strain 5a2).